Reading from the N-terminus, the 1907-residue chain is Probable RNA-directed RNA polymerase (1907 aa).

Residues 42-61 (NTHNDHEETHGESPEVPKAS) are disordered. The segment covering 44–56 (HNDHEETHGESPE) has biased composition (basic and acidic residues).

Belongs to the totiviridae RNA-directed RNA polymerase family.

The enzyme catalyses RNA(n) + a ribonucleoside 5'-triphosphate = RNA(n+1) + diphosphate. Its function is as follows. RNA-dependent RNA polymerase which replicates the viral genome. Catalyzes the transcription of fully conservative plus-strand genomic RNAs that are extruded from the virion into the cytoplasm where they function as mRNAs for translation of viral proteins and also as substrates for encapsidation to form new virions. Once encapsidated, the positive strand is converted to dsRNA by the RNA-directed RNA polymerase. Displays ssRNA-binding activity. In Giardia intestinalis (Giardia lamblia), this protein is Probable RNA-directed RNA polymerase (gag-pol).